A 447-amino-acid chain; its full sequence is UDP-N-acetylmuramate--L-alanine ligase (447 aa).

108 to 114 serves as a coordination point for ATP; it reads GSHGKTS.

It belongs to the MurCDEF family.

The protein localises to the cytoplasm. The enzyme catalyses UDP-N-acetyl-alpha-D-muramate + L-alanine + ATP = UDP-N-acetyl-alpha-D-muramoyl-L-alanine + ADP + phosphate + H(+). It functions in the pathway cell wall biogenesis; peptidoglycan biosynthesis. Cell wall formation. The polypeptide is UDP-N-acetylmuramate--L-alanine ligase (Listeria monocytogenes serovar 1/2a (strain ATCC BAA-679 / EGD-e)).